The sequence spans 121 residues: uncharacterized protein (121 aa).

Positions 8-37 (KQLMVCRDEIKKLKLKEKEAKNRILTYLKN) form a coiled coil.

This is an uncharacterized protein from Aedes vexans (Inland floodwater mosquito).